Reading from the N-terminus, the 571-residue chain is Proline--tRNA ligase (571 aa).

This sequence belongs to the class-II aminoacyl-tRNA synthetase family. ProS type 1 subfamily. Homodimer.

Its subcellular location is the cytoplasm. It carries out the reaction tRNA(Pro) + L-proline + ATP = L-prolyl-tRNA(Pro) + AMP + diphosphate. Its function is as follows. Catalyzes the attachment of proline to tRNA(Pro) in a two-step reaction: proline is first activated by ATP to form Pro-AMP and then transferred to the acceptor end of tRNA(Pro). As ProRS can inadvertently accommodate and process non-cognate amino acids such as alanine and cysteine, to avoid such errors it has two additional distinct editing activities against alanine. One activity is designated as 'pretransfer' editing and involves the tRNA(Pro)-independent hydrolysis of activated Ala-AMP. The other activity is designated 'posttransfer' editing and involves deacylation of mischarged Ala-tRNA(Pro). The misacylated Cys-tRNA(Pro) is not edited by ProRS. This Thermodesulfovibrio yellowstonii (strain ATCC 51303 / DSM 11347 / YP87) protein is Proline--tRNA ligase.